A 404-amino-acid polypeptide reads, in one-letter code: Pyrophosphate--fructose 6-phosphate 1-phosphotransferase (404 aa).

Position 12 (G12) interacts with diphosphate. D121 provides a ligand contact to Mg(2+). Substrate is bound by residues T149–D151, M194–R196, E266, and Y323–R326. D151 serves as the catalytic Proton acceptor.

This sequence belongs to the phosphofructokinase type A (PFKA) family. PPi-dependent PFK group II subfamily. Clade 'P' sub-subfamily. Homodimer. Mg(2+) is required as a cofactor.

Its subcellular location is the cytoplasm. It carries out the reaction beta-D-fructose 6-phosphate + diphosphate = beta-D-fructose 1,6-bisphosphate + phosphate + H(+). It functions in the pathway carbohydrate degradation; glycolysis; D-glyceraldehyde 3-phosphate and glycerone phosphate from D-glucose: step 3/4. Non-allosteric. Catalyzes the phosphorylation of D-fructose 6-phosphate, the first committing step of glycolysis. Uses inorganic phosphate (PPi) as phosphoryl donor instead of ATP like common ATP-dependent phosphofructokinases (ATP-PFKs), which renders the reaction reversible, and can thus function both in glycolysis and gluconeogenesis. Consistently, PPi-PFK can replace the enzymes of both the forward (ATP-PFK) and reverse (fructose-bisphosphatase (FBPase)) reactions. The sequence is that of Pyrophosphate--fructose 6-phosphate 1-phosphotransferase from Propionibacterium freudenreichii subsp. shermanii (strain ATCC 9614 / DSM 4902 / CIP 103027 / NCIMB 8099 / CIRM-BIA1).